We begin with the raw amino-acid sequence, 1516 residues long: Alpha-2-macroglobulin homolog (1516 aa).

The signal sequence occupies residues 1–26 (MSNLRRFSRSLAVAALVLLPFAAVQA).

This sequence belongs to the protease inhibitor I39 (alpha-2-macroglobulin) family. Bacterial alpha-2-macroglobulin subfamily.

The sequence is that of Alpha-2-macroglobulin homolog from Pseudomonas aeruginosa (strain ATCC 15692 / DSM 22644 / CIP 104116 / JCM 14847 / LMG 12228 / 1C / PRS 101 / PAO1).